Reading from the N-terminus, the 245-residue chain is 1-(5-phosphoribosyl)-5-[(5-phosphoribosylamino)methylideneamino] imidazole-4-carboxamide isomerase (245 aa).

Asp7 serves as the catalytic Proton acceptor. Asp129 serves as the catalytic Proton donor.

Belongs to the HisA/HisF family.

It localises to the cytoplasm. The catalysed reaction is 1-(5-phospho-beta-D-ribosyl)-5-[(5-phospho-beta-D-ribosylamino)methylideneamino]imidazole-4-carboxamide = 5-[(5-phospho-1-deoxy-D-ribulos-1-ylimino)methylamino]-1-(5-phospho-beta-D-ribosyl)imidazole-4-carboxamide. The protein operates within amino-acid biosynthesis; L-histidine biosynthesis; L-histidine from 5-phospho-alpha-D-ribose 1-diphosphate: step 4/9. This is 1-(5-phosphoribosyl)-5-[(5-phosphoribosylamino)methylideneamino] imidazole-4-carboxamide isomerase from Escherichia coli O9:H4 (strain HS).